Reading from the N-terminus, the 101-residue chain is NAD(P)H-quinone oxidoreductase subunit 4L, chloroplastic (101 aa).

3 consecutive transmembrane segments (helical) span residues methionine 2–isoleucine 22, methionine 27–isoleucine 46, and isoleucine 61–valine 81.

It belongs to the complex I subunit 4L family. NDH is composed of at least 16 different subunits, 5 of which are encoded in the nucleus.

The protein localises to the plastid. The protein resides in the chloroplast thylakoid membrane. It catalyses the reaction a plastoquinone + NADH + (n+1) H(+)(in) = a plastoquinol + NAD(+) + n H(+)(out). The catalysed reaction is a plastoquinone + NADPH + (n+1) H(+)(in) = a plastoquinol + NADP(+) + n H(+)(out). NDH shuttles electrons from NAD(P)H:plastoquinone, via FMN and iron-sulfur (Fe-S) centers, to quinones in the photosynthetic chain and possibly in a chloroplast respiratory chain. The immediate electron acceptor for the enzyme in this species is believed to be plastoquinone. Couples the redox reaction to proton translocation, and thus conserves the redox energy in a proton gradient. In Drimys granadensis, this protein is NAD(P)H-quinone oxidoreductase subunit 4L, chloroplastic.